The primary structure comprises 215 residues: Adenylate kinase (215 aa).

10 to 15 (GSGKGT) contacts ATP. The tract at residues 30-59 (STGDILREHVRNGTELGKEAKKYMDAGQLV) is NMP. AMP-binding positions include threonine 31, arginine 36, 57–59 (QLV), 85–88 (GYPR), and glutamine 92. The interval 126 to 162 (GRRMCKCGRSYHIIFNPPKVPGKCDECGGELYHRDDD) is LID. Residue arginine 127 coordinates ATP. Residues cysteine 130 and cysteine 132 each contribute to the Zn(2+) site. Residue 135-136 (SY) participates in ATP binding. Zn(2+) is bound by residues cysteine 149 and cysteine 152. Positions 159 and 170 each coordinate AMP. Glycine 198 is a binding site for ATP.

Belongs to the adenylate kinase family. As to quaternary structure, monomer.

The protein resides in the cytoplasm. The enzyme catalyses AMP + ATP = 2 ADP. Its pathway is purine metabolism; AMP biosynthesis via salvage pathway; AMP from ADP: step 1/1. Functionally, catalyzes the reversible transfer of the terminal phosphate group between ATP and AMP. Plays an important role in cellular energy homeostasis and in adenine nucleotide metabolism. The sequence is that of Adenylate kinase from Methanothrix thermoacetophila (strain DSM 6194 / JCM 14653 / NBRC 101360 / PT) (Methanosaeta thermophila).